Here is a 374-residue protein sequence, read N- to C-terminus: S-adenosylmethionine:tRNA ribosyltransferase-isomerase (374 aa).

It belongs to the QueA family. As to quaternary structure, monomer.

The protein resides in the cytoplasm. The catalysed reaction is 7-aminomethyl-7-carbaguanosine(34) in tRNA + S-adenosyl-L-methionine = epoxyqueuosine(34) in tRNA + adenine + L-methionine + 2 H(+). It participates in tRNA modification; tRNA-queuosine biosynthesis. Its function is as follows. Transfers and isomerizes the ribose moiety from AdoMet to the 7-aminomethyl group of 7-deazaguanine (preQ1-tRNA) to give epoxyqueuosine (oQ-tRNA). The protein is S-adenosylmethionine:tRNA ribosyltransferase-isomerase of Prochlorococcus marinus (strain AS9601).